A 1031-amino-acid polypeptide reads, in one-letter code: Toll-like receptor 9 (1031 aa).

The N-terminal stretch at 1 to 25 (MGPCHGALQPLSLLVQAAMLAVALA) is a signal peptide. Topologically, residues 26-817 (QGTLPPFLPC…LCLDESLSWD (792 aa)) are extracellular. An intrachain disulfide couples cysteine 35 to cysteine 45. 47-51 (WLFLK) contributes to the DNA binding site. 26 LRR repeats span residues 62-85 (RDNV…DFAQ), 87-110 (SNLQ…HFPC), 122-147 (VPTL…SLVS), 150-166 (LSRT…LTGL), 167-190 (HALR…ALEV), 198-221 (LGNL…LPPS), 223-242 (EYLL…DLAN), 243-268 (LTAL…CVEC), 283-306 (LSRL…WFRG), 308-332 (GNLT…AFQG), 333-356 (LAQL…HLTL), 363-386 (LLSL…TLQP), 390-413 (LPML…IFKD), 414-438 (FPGL…ATTG), 470-494 (CKNL…MFAQ), 496-519 (SRLQ…QFVP), 520-543 (LTSL…SFTE), 545-567 (PRLE…VGHN), 574-598 (LPTL…LCST), 600-622 (LWAL…LYLR), 627-650 (LRSL…TLGN), 652-675 (PKSL…SLTL), 676-699 (LPNL…SLPS), 701-723 (TQLQ…FFAL), 724-747 (ATRL…WFGF), and 749-772 (AGSL…AFVD). A glycan (N-linked (GlcNAc...) asparagine) is linked at asparagine 64. DNA contacts are provided by residues 72–77 (SNRIHH) and 95–109 (KWNC…MHFP). Cysteine 98 and cysteine 110 are oxidised to a cystine. Asparagine 129 carries N-linked (GlcNAc...) asparagine glycosylation. DNA-binding positions include tyrosine 132, arginine 152, and 179 to 181 (YYK). A disulfide bridge connects residues cysteine 178 and cysteine 184. Asparagine 200 carries N-linked (GlcNAc...) asparagine glycosylation. Tyrosine 208 is a binding site for DNA. N-linked (GlcNAc...) asparagine glycans are attached at residues asparagine 210 and asparagine 242. 2 disulfides stabilise this stretch: cysteine 255-cysteine 268 and cysteine 258-cysteine 265. Cysteine 258 carries S-palmitoyl cysteine lipidation. Position 262 (arginine 262) interacts with DNA. Cysteine 265 is lipidated: S-palmitoyl cysteine. Residues asparagine 309 and asparagine 340 are each glycosylated (N-linked (GlcNAc...) asparagine). Cysteine 470 and cysteine 500 are oxidised to a cystine. Residues asparagine 472 and asparagine 513 are each glycosylated (N-linked (GlcNAc...) asparagine). N-linked (GlcNAc...) asparagine glycosylation is present at asparagine 567. Asparagine 669 and asparagine 694 each carry an N-linked (GlcNAc...) asparagine glycan. Asparagine 731 is a glycosylation site (N-linked (GlcNAc...) asparagine). Disulfide bonds link cysteine 764–cysteine 790 and cysteine 766–cysteine 809. A helical membrane pass occupies residues 818–838 (CFGLSLLVVALGLAMPMLHHL). The Cytoplasmic segment spans residues 839-1031 (CGWDLWYCFH…NFCRGPTMAE (193 aa)). Positions 866–1011 (LSYDAFVVFD…SFWAQLGMAL (146 aa)) constitute a TIR domain.

Belongs to the Toll-like receptor family. As to quaternary structure, monomer and homodimer. Exists as a monomer in the absence of unmethylated cytidine-phosphate-guanosine (CpG) ligand. Proteolytic processing of an insertion loop (Z-loop) is required for homodimerization upon binding to the unmethylated CpG ligand leading to its activation. Interacts with MYD88 via their respective TIR domains. Interacts with BTK. Interacts (via transmembrane domain) with UNC93B1. Interacts with CD300LH; the interaction may promote full activation of TLR9-triggered innate responses. Interacts with CNPY3 and HSP90B1; this interaction is required for proper folding in the endoplasmic reticulum. Interacts with SMPDL3B. Interacts with CD82; this interaction is essential for TLR9-dependent myddosome formation in response to CpG stimulation. Post-translationally, activated by proteolytic cleavage of the flexible loop between repeats LRR14 and LRR15 within the ectodomain. Cleavage requires UNC93B1. Proteolytically processed by first removing the majority of the ectodomain by either asparagine endopeptidase (AEP) or a cathepsin followed by a trimming event that is solely cathepsin mediated and required for optimal receptor signaling. Palmitoylated by ZDHHC3 in the Golgi regulates TLR9 trafficking from the Golgi to endosomes. Depalmitoylation by PPT1 controls the release of TLR9 from UNC93B1 in endosomes. As to expression, expressed in airway epithelium, vascular endothelium and inflammatory cells in blood vessels of the lungs (at protein level). Highly expressed in pulmonary intravascular macrophages (PIMs) and to a lesser extent in alveolar macrophages, neutrophiles, type-II alveolar epithelial cells and bronchial epithelial cells of the lungs (at protein level). High constitutive intracellular expression in leukocytes including polymorphonuclear leukocytes (PMNs), CD4 and CD8 T cells (at protein level). Expressed throughout the respiratory tract including larynx, upper, middle and lower trachea, and bronchus in isolated equine respiratory epithelial cells (ERECs) and in fully differentiated ERECs cultured at the air-fluid interface (AFI) (at protein level). Constitutively expressed in peripheral blood mononuclear cells (PBMCs), lymph nodes and spleen. The level of expression in PBMCs is about 2- to 3-fold higher than that in lymph nodes and spleen. Very low expression in liver, heart, lung, kidney, small intestine, colon and stomach. Low expression in the airway tissue epithelium of the larynx, upper trachea, middle tranchea, lower trachea, bronchus and spleen, and more abundant expression in mesenteric lymph node. Not expressed in fully differentiated bronchus epithelial cells cultured at the AFI for four weeks. Expressed in gingival tissue.

The protein resides in the endoplasmic reticulum membrane. It is found in the endosome. It localises to the lysosome. Its subcellular location is the cytoplasmic vesicle. The protein localises to the phagosome. The protein resides in the cell membrane. It is found in the cytoplasm. It localises to the nucleus. Its function is as follows. Key component of innate and adaptive immunity. TLRs (Toll-like receptors) control host immune response against pathogens through recognition of molecular patterns specific to microorganisms. TLR9 is a nucleotide-sensing TLR which is activated by unmethylated cytidine-phosphate-guanosine (CpG) dinucleotides. Acts via MYD88 and TRAF6, leading to NF-kappa-B activation, cytokine secretion and the inflammatory response. Upon CpG stimulation, induces B-cell proliferation, activation, survival and antibody production. In Equus caballus (Horse), this protein is Toll-like receptor 9.